Reading from the N-terminus, the 227-residue chain is Orotidine 5'-phosphate decarboxylase (227 aa).

Substrate-binding positions include Asp12, Lys34, 61–70, Thr117, Arg178, Gln187, Gly207, and Arg208; that span reads DLKLHDIPNT. Lys63 acts as the Proton donor in catalysis.

The protein belongs to the OMP decarboxylase family. Type 1 subfamily. In terms of assembly, homodimer.

It catalyses the reaction orotidine 5'-phosphate + H(+) = UMP + CO2. It functions in the pathway pyrimidine metabolism; UMP biosynthesis via de novo pathway; UMP from orotate: step 2/2. Functionally, catalyzes the decarboxylation of orotidine 5'-monophosphate (OMP) to uridine 5'-monophosphate (UMP). The sequence is that of Orotidine 5'-phosphate decarboxylase from Anaeromyxobacter sp. (strain K).